The sequence spans 384 residues: MTGIPPPSRFPEQPIPPWRRAVLKVGSSLLAADGGGLSPRFALDLAHFVSANITAGRQLVIVSSGAVAAGRALIPPLPESGGALAARQALAALGQAQLIALWQRFFDRPVAQVLLTHDDLRNRRRYLNARATLRELLHLGTLPVVNENDTVSVDELKLGDNDNLAAIVAALIDAQALFIATDIDGLYTTDPRHHPDAQPLHEVRTLTPEHLAMAGDSSSTGGTGGMRTKLEAALKAGAAGIDTYLFNGRSSDVVRGLAQHRLRGTRIHPTCTPIAARKYWLRHAPVEPGAILIDAGAAAALAQQGASLLPGGVLSAEGDFRRGDMIQITTRSPDHPSHPLARGLVQYSAADVRRIAGCHSRDIQTLLGYTYGDTIVHRDDLVLL.

K24 provides a ligand contact to ATP. Residues S64, D149, and N161 each coordinate substrate. Residues 181–182 (TD) and 223–229 (TGGMRTK) each bind ATP. Residues 288-370 (PGAILIDAGA…RDIQTLLGYT (83 aa)) enclose the PUA domain.

Belongs to the glutamate 5-kinase family.

It localises to the cytoplasm. The catalysed reaction is L-glutamate + ATP = L-glutamyl 5-phosphate + ADP. Its pathway is amino-acid biosynthesis; L-proline biosynthesis; L-glutamate 5-semialdehyde from L-glutamate: step 1/2. In terms of biological role, catalyzes the transfer of a phosphate group to glutamate to form L-glutamate 5-phosphate. The polypeptide is Glutamate 5-kinase (Xylella fastidiosa (strain M12)).